Reading from the N-terminus, the 297-residue chain is Esterase LipU (297 aa).

Residues Ser140, Glu239, and His269 contribute to the active site.

The protein belongs to the 'GDXG' lipolytic enzyme family.

Its subcellular location is the secreted. The enzyme catalyses a fatty acid ester + H2O = an aliphatic alcohol + a fatty acid + H(+). It carries out the reaction a butanoate ester + H2O = an aliphatic alcohol + butanoate + H(+). The catalysed reaction is an acetyl ester + H2O = an aliphatic alcohol + acetate + H(+). It catalyses the reaction decanoate ester + H2O = decanoate + an aliphatic alcohol + H(+). The enzyme catalyses an octanoate ester + H2O = an aliphatic alcohol + octanoate + H(+). It carries out the reaction a dodecanoate ester + H2O = an aliphatic alcohol + dodecanoate + H(+). The catalysed reaction is hexadecanoate ester + H2O = an aliphatic alcohol + hexadecanoate + H(+). Inhibited by the ionic detergent SDS and by the serine protease inhibitor PMSF. Inhibited by the FDA approved drugs Diosmin, Acarbose and Ouabain. These drugs remain bound in the active site pocket and could be probable drug candidates to combat TB disease. Its function is as follows. Esterase that shows preference for short chain fatty acids. Contributes to the growth of M.tuberculosis during the nutritive stress. Elicits strong humoral response in both extrapulmonary and relapsed cases of tuberculosis patients. This is Esterase LipU from Mycobacterium tuberculosis (strain ATCC 25618 / H37Rv).